We begin with the raw amino-acid sequence, 65 residues long: Large ribosomal subunit protein bL35 (65 aa).

This sequence belongs to the bacterial ribosomal protein bL35 family.

This is Large ribosomal subunit protein bL35 from Psychrobacter arcticus (strain DSM 17307 / VKM B-2377 / 273-4).